Reading from the N-terminus, the 305-residue chain is Coenzyme PQQ synthesis protein B (305 aa).

This sequence belongs to the PqqB family.

It functions in the pathway cofactor biosynthesis; pyrroloquinoline quinone biosynthesis. May be involved in the transport of PQQ or its precursor to the periplasm. The sequence is that of Coenzyme PQQ synthesis protein B from Cupriavidus necator (strain ATCC 17699 / DSM 428 / KCTC 22496 / NCIMB 10442 / H16 / Stanier 337) (Ralstonia eutropha).